The primary structure comprises 244 residues: Carbonic anhydrase (244 aa).

The N-terminal stretch at 1-19 (MKGKLSIALMLSVCFSASA) is a signal peptide. Positions 23–244 (VHWGYEGNGD…QPLNGRIIIH (222 aa)) constitute an Alpha-carbonic anhydrase domain. A disulfide bridge links Cys46 with Cys199. Residue His84 is the Proton acceptor of the active site. Residues His109, His111, and His128 each contribute to the Zn(2+) site. 195-196 (TT) lines the substrate pocket.

It belongs to the alpha-carbonic anhydrase family. The cofactor is Zn(2+).

The protein resides in the periplasm. It carries out the reaction hydrogencarbonate + H(+) = CO2 + H2O. In terms of biological role, reversible hydration of carbon dioxide. The protein is Carbonic anhydrase (cah) of Pectobacterium carotovorum (Erwinia carotovora).